The primary structure comprises 640 residues: MFSCTKAYEYQNYSALKRACLRRKVLFEDPHFPASDDSLYYKGTPGPTVRWKRPFDICDDPRLFVDGISSHDLHQGQVGNCWFVAACSSLASRESLWQKVIPDWKEQEWNPEKPDSYAGIFHFNFWRFGEWVDVVVDDRLPTVNNQLIYCHSNSKNEFWCAPVEKAYAKLAGCYQALDGGNTADALVDFTGGVSEPIDLTEGDLATDEAKRSQLFERVLKVHSRGGLISASIKAMTAADMETRLACGLVKGHAYAVTDVRKVRLGHGLLAFFKSEKLDMIRLRNPWGERVWTGPWSDTSEEWQKVSKSEREKMGVTVQDDGEFWMTYEDMCRYFTDIIKCRLINTSYLSIHKTWEEARLRGAWTRHEDPQQNRSGGCINHKDTFFQNPQYIFEVKKPEDEVLICIQQRPKRSTRREGKGENLAIGFDIYKVEENRQYRMHSLQHKAASSIYINSRSVFLRTELPEGRYVIIPTTFEPGHTGELLLRVFTDVPSNCRELRLDEPPRTCWSSLCGYPQQVTQVHVLGAAGLKDSSTGANSYVIIKCEGEKVRSAVQRGTSTPEYNVKGIFYRKKLSQPITVQVWNNRVLKDEFLGQVHLKTAPDDLQDLHSLHLQDRSGRQPSDLPGIVAVRVLCSASLTAV.

The Calpain catalytic domain occupies Leu-26–Ile-343. Residues Cys-81, His-252, and Asn-284 contribute to the active site. The domain III stretch occupies residues Asn-344–Arg-496. The region spanning Arg-499–Gly-617 is the C2 domain.

This sequence belongs to the peptidase C2 family.

Functionally, calcium-regulated non-lysosomal thiol-protease. The chain is Calpain-5 (Capn5) from Rattus norvegicus (Rat).